We begin with the raw amino-acid sequence, 324 residues long: Hairy/enhancer-of-split related with YRPW motif protein 2 (324 aa).

The segment at 1–34 (MKRPCEDSTSDSDMDETIDVGSENNYSGQSNGSF) is disordered. A compositionally biased stretch (acidic residues) spans 8–18 (STSDSDMDETI). The segment covering 22-34 (SENNYSGQSNGSF) has biased composition (polar residues). The bHLH domain maps to 48–103 (ARKKRRGIIEKRRRDRINNSLSELRRLVPTAFEKQGSAKLEKAEILQMTVDHLKML). The Orange domain maps to 122-157 (LSIGFRECLTEVARYLSSVEGLDSSDPLRVRLVSHL). Residues 294 to 311 (SSSVSTSTTSQQSSGSSS) are compositionally biased toward low complexity. The tract at residues 294–324 (SSSVSTSTTSQQSSGSSSKPYRPWGTEVGAF) is disordered. Residues 314 to 317 (YRPW) carry the YRPW motif motif.

Belongs to the HEY family.

It localises to the nucleus. In terms of biological role, transcriptional repressor. Downstream effector of Notch signaling which regulates cell fate choice in angioblasts. Represses the venous cell fate, thereby promoting the arterial cell fate and aorta formation. The polypeptide is Hairy/enhancer-of-split related with YRPW motif protein 2 (hey2) (Danio rerio (Zebrafish)).